The primary structure comprises 347 residues: S-adenosylmethionine:tRNA ribosyltransferase-isomerase (347 aa).

Belongs to the QueA family. As to quaternary structure, monomer.

The protein resides in the cytoplasm. The catalysed reaction is 7-aminomethyl-7-carbaguanosine(34) in tRNA + S-adenosyl-L-methionine = epoxyqueuosine(34) in tRNA + adenine + L-methionine + 2 H(+). It functions in the pathway tRNA modification; tRNA-queuosine biosynthesis. Its function is as follows. Transfers and isomerizes the ribose moiety from AdoMet to the 7-aminomethyl group of 7-deazaguanine (preQ1-tRNA) to give epoxyqueuosine (oQ-tRNA). The protein is S-adenosylmethionine:tRNA ribosyltransferase-isomerase of Methylococcus capsulatus (strain ATCC 33009 / NCIMB 11132 / Bath).